We begin with the raw amino-acid sequence, 108 residues long: Putative membrane protein insertion efficiency factor (108 aa).

This sequence belongs to the UPF0161 family.

The protein resides in the cell inner membrane. Could be involved in insertion of integral membrane proteins into the membrane. This Chelativorans sp. (strain BNC1) protein is Putative membrane protein insertion efficiency factor.